The primary structure comprises 160 residues: Thebaine synthase 2 (160 aa).

A thebaine-binding site is contributed by Ser-74. The active-site Proton acceptor is the His-89. Thr-105 contributes to the thebaine binding site.

The protein belongs to the MLP family. As to quaternary structure, homodimer (allosteric) and oligomers. Expressed in poppy latex.

The enzyme catalyses (7S)-O-acetylsalutaridinol = thebaine + acetate + H(+). It participates in alkaloid biosynthesis; morphine biosynthesis. Its activity is regulated as follows. Slightly inhibited by salutaridine and (7S)-salutaridinol. Functionally, catalyzes the formation of thebaine from (7S)-salutaridinol 7-O-acetate at the expense of labile hydroxylated by-products, which are preferentially produced by spontaneous allylic elimination. No visible activity toward (7S)-salutaridinol (at pH 7). The sequence is that of Thebaine synthase 2 from Papaver somniferum (Opium poppy).